A 109-amino-acid chain; its full sequence is Small ribosomal subunit protein eS25 (109 aa).

Over residues 1–13 (MVKKIQESKEKKA) the composition is skewed to basic and acidic residues. Positions 1-34 (MVKKIQESKEKKALKAASGTRKDKKKWGDGRKKE) are disordered.

This sequence belongs to the eukaryotic ribosomal protein eS25 family.

In Encephalitozoon cuniculi (strain GB-M1) (Microsporidian parasite), this protein is Small ribosomal subunit protein eS25 (RPS25-1).